A 729-amino-acid polypeptide reads, in one-letter code: Glycerophosphodiester phosphodiesterase GDPDL5 (729 aa).

Residues 1–22 (MACPRVIFLILITFFILQTAFS) form the signal peptide. GP-PDE domains follow at residues 33–320 (PAVI…YRAI) and 337–645 (ITII…ARYR). N-linked (GlcNAc...) asparagine glycans are attached at residues Asn-88, Asn-162, Asn-218, Asn-227, Asn-285, Asn-302, Asn-390, Asn-401, and Asn-507. Residues 709–729 (AIEVPFAFIAMAILVCFFISV) traverse the membrane as a helical segment.

Belongs to the glycerophosphoryl diester phosphodiesterase family. Expressed in stems, flowers and siliques.

It localises to the membrane. It catalyses the reaction a sn-glycero-3-phosphodiester + H2O = an alcohol + sn-glycerol 3-phosphate + H(+). In Arabidopsis thaliana (Mouse-ear cress), this protein is Glycerophosphodiester phosphodiesterase GDPDL5.